Consider the following 276-residue polypeptide: Pantothenate synthetase (276 aa).

27–34 (MGALHRGH) contacts ATP. The active-site Proton donor is the H34. Q58 lines the (R)-pantoate pocket. Q58 provides a ligand contact to beta-alanine. Position 147–150 (147–150 (GKKD)) interacts with ATP. Q153 is a binding site for (R)-pantoate. Residues V176 and 184-187 (LSSR) each bind ATP.

It belongs to the pantothenate synthetase family. Homodimer.

Its subcellular location is the cytoplasm. The catalysed reaction is (R)-pantoate + beta-alanine + ATP = (R)-pantothenate + AMP + diphosphate + H(+). It functions in the pathway cofactor biosynthesis; (R)-pantothenate biosynthesis; (R)-pantothenate from (R)-pantoate and beta-alanine: step 1/1. Functionally, catalyzes the condensation of pantoate with beta-alanine in an ATP-dependent reaction via a pantoyl-adenylate intermediate. The polypeptide is Pantothenate synthetase (Helicobacter pylori (strain G27)).